The primary structure comprises 766 residues: Dipeptidyl peptidase 4 (766 aa).

At 1 to 6 the chain is on the cytoplasmic side; sequence MKTPWK. Residues 7–28 form a helical; Signal-anchor for type II membrane protein membrane-spanning segment; the sequence is VLLGLLGAAALVTIITVPVVLL. The Extracellular segment spans residues 29–766; the sequence is NKGTDDATAD…HFIKQCFSLP (738 aa). N-linked (GlcNAc...) asparagine glycans are attached at residues Asn85, Asn92, Asn150, Asn219, Asn229, Asn281, and Asn321. 4 disulfides stabilise this stretch: Cys328-Cys339, Cys385-Cys394, Cys444-Cys447, and Cys454-Cys472. Asn520 carries an N-linked (GlcNAc...) asparagine glycan. Ser630 acts as the Charge relay system in catalysis. Cysteines 649 and 762 form a disulfide. N-linked (GlcNAc...) asparagine glycosylation occurs at Asn685. Active-site charge relay system residues include Asp708 and His740.

This sequence belongs to the peptidase S9B family. DPPIV subfamily. As to quaternary structure, monomer. Homodimer. Heterodimer with Seprase (FAP). Requires homodimerization for optimal dipeptidyl peptidase activity and T-cell costimulation. Found in a membrane raft complex, at least composed of BCL10, CARD11, DPP4 and IKBKB. Associates with collagen. Interacts with PTPRC; the interaction is enhanced in an interleukin-12-dependent manner in activated lymphocytes. Interacts (via extracellular domain) with ADA; does not inhibit its dipeptidyl peptidase activity. Interacts with CAV1 (via the N-terminus); the interaction is direct. Interacts (via cytoplasmic tail) with CARD11 (via PDZ domain); its homodimerization is necessary for interaction with CARD11. Interacts with IGF2R; the interaction is direct. Interacts with GPC3. Interacts with human coronavirus-EMC spike protein and acts as a receptor for this virus. (Microbial infection) Interacts with MERS coronavirus/MERS-CoV spike protein. In terms of processing, the soluble form (Dipeptidyl peptidase 4 soluble form also named SDPP) derives from the membrane form (Dipeptidyl peptidase 4 membrane form also named MDPP) by proteolytic processing. Post-translationally, N- and O-Glycosylated. Phosphorylated. Mannose 6-phosphate residues in the carbohydrate moiety are necessary for interaction with IGF2R in activated T-cells. Mannose 6-phosphorylation is induced during T-cell activation. Expressed specifically in lymphatic vessels but not in blood vessels in the skin, small intestine, esophagus, ovary, breast and prostate glands. Not detected in lymphatic vessels in the lung, kidney, uterus, liver and stomach (at protein level). Expressed in the poorly differentiated crypt cells of the small intestine as well as in the mature villous cells. Expressed at very low levels in the colon.

Its subcellular location is the secreted. It is found in the cell membrane. The protein localises to the apical cell membrane. It localises to the cell projection. The protein resides in the invadopodium membrane. Its subcellular location is the lamellipodium membrane. It is found in the cell junction. The protein localises to the membrane raft. It catalyses the reaction Release of an N-terminal dipeptide, Xaa-Yaa-|-Zaa-, from a polypeptide, preferentially when Yaa is Pro, provided Zaa is neither Pro nor hydroxyproline.. Inhibited by GPC3 and diprotin A. Cell surface glycoprotein receptor involved in the costimulatory signal essential for T-cell receptor (TCR)-mediated T-cell activation. Acts as a positive regulator of T-cell coactivation, by binding at least ADA, CAV1, IGF2R, and PTPRC. Its binding to CAV1 and CARD11 induces T-cell proliferation and NF-kappa-B activation in a T-cell receptor/CD3-dependent manner. Its interaction with ADA also regulates lymphocyte-epithelial cell adhesion. In association with FAP is involved in the pericellular proteolysis of the extracellular matrix (ECM), the migration and invasion of endothelial cells into the ECM. May be involved in the promotion of lymphatic endothelial cells adhesion, migration and tube formation. When overexpressed, enhanced cell proliferation, a process inhibited by GPC3. Also acts as a serine exopeptidase with a dipeptidyl peptidase activity that regulates various physiological processes by cleaving peptides in the circulation, including many chemokines, mitogenic growth factors, neuropeptides and peptide hormones such as brain natriuretic peptide 32. Removes N-terminal dipeptides sequentially from polypeptides having unsubstituted N-termini provided that the penultimate residue is proline. Functionally, (Microbial infection) Acts as a receptor for human coronavirus MERS-CoV-2. The chain is Dipeptidyl peptidase 4 from Homo sapiens (Human).